A 381-amino-acid chain; its full sequence is Cytochrome b (381 aa).

Transmembrane regions (helical) follow at residues 38–58, 82–103, 118–138, and 183–203; these read FGSLLGLCLLIQIVIGLFLAM, WLLRTVHANGASFFFICIYFHI, WMTGIALLFLVMAAAFLGYVL, and FFTFHFLIPFLVAGLTMIHLL. 2 residues coordinate heme b: His88 and His102. Heme b-binding residues include His187 and His201. An a ubiquinone-binding site is contributed by His206. 4 consecutive transmembrane segments (helical) span residues 231–251, 293–313, 325–345, and 352–372; these read IKDTVGFMVLIFFLVTLSLTS, LGGVIALVSSILILVSLPFTF, VAQPLFWSWVSVFLLLTWIGA, and YNFLGQILTCAYFSYFVFTPI.

The protein belongs to the cytochrome b family. In terms of assembly, the main subunits of complex b-c1 are: cytochrome b, cytochrome c1 and the Rieske protein. It depends on heme b as a cofactor.

Its subcellular location is the mitochondrion inner membrane. In terms of biological role, component of the ubiquinol-cytochrome c reductase complex (complex III or cytochrome b-c1 complex) that is part of the mitochondrial respiratory chain. The b-c1 complex mediates electron transfer from ubiquinol to cytochrome c. Contributes to the generation of a proton gradient across the mitochondrial membrane that is then used for ATP synthesis. The sequence is that of Cytochrome b (MT-CYB) from Artemia franciscana (Brine shrimp).